The following is a 233-amino-acid chain: MVHRPRLLCLHGGGASSQIMRVQFSKLESALRKTFQLVFLEGPLDSAPGPGVLPFFEDFGPYSCWVSDDKSLLPEEKRKEENNAIAYIKTFMLQYGPFAGILGFSQGARATASILLEQQREAFTHDALFGVFFCGTFPPFIPDAPDISLPTVHILGLTDPYLRESEELLEHCTQQSVRRVIKFNGGHHMPTSSDVTQKIADVITMTYRTSQRKKVSNIWRKKVPDCRSLALES.

Active-site charge relay system residues include Ser-105, Asp-159, and His-187.

This sequence belongs to the LovG family.

Its function is as follows. Esterase; part of the gene cluster that mediates the biosynthesis of the mycotoxin fusarin C. Within the cluster, FUS1, FUS2, FUS8 and FUS9 are sufficient for fusarin production. The other FUS cluster members are not essential for fusarin C biosynthesis. This Gibberella fujikuroi (strain CBS 195.34 / IMI 58289 / NRRL A-6831) (Bakanae and foot rot disease fungus) protein is Esterase FUS5.